We begin with the raw amino-acid sequence, 1221 residues long: Coatomer subunit alpha (1221 aa).

WD repeat units lie at residues 7 to 46 (TKAS…LLEK), 49 to 88 (EHEG…CLFT), 91 to 130 (GHKD…CIAE), 133 to 172 (GHNH…KKMT), 202 to 241 (GHDR…VDTF), 243 to 282 (GHYN…TVHM), 285 to 323 (RDHD…PLFV), 358 to 399 (PSNN…SNTV), and 528 to 567 (WDDN…TGVK). A disordered region spans residues 820–885 (GVEQSTSTPT…DDGGWERDDL (66 aa)). The segment covering 844–857 (SQQQSSQQQQQQQQ) has biased composition (low complexity). The stretch at 910–953 (PQPGPSFSMIWARNSQFAVDHIAAGSFESAMNILNSQIGAVNFD) is one WD 10 repeat.

As to quaternary structure, oligomeric complex that consists of at least the alpha, beta, beta', gamma, delta, epsilon and zeta subunits.

It localises to the cytoplasm. The protein resides in the golgi apparatus membrane. Its function is as follows. The coatomer is a cytosolic protein complex that binds to dilysine motifs and reversibly associates with Golgi non-clathrin-coated vesicles, which further mediate biosynthetic protein transport from the ER, via the Golgi up to the trans Golgi network. Coatomer complex is required for budding from Golgi membranes, and is essential for the retrograde Golgi-to-ER transport of dilysine-tagged proteins. In Dictyostelium discoideum (Social amoeba), this protein is Coatomer subunit alpha (copa).